The following is a 332-amino-acid chain: D-amino acid oxidase (332 aa).

10 residues coordinate FAD: alanine 8, glycine 9, isoleucine 10, threonine 39, threonine 40, alanine 45, glycine 46, leucine 47, valine 161, and serine 180. D-proline-binding residues include tyrosine 218 and arginine 274. Residues tyrosine 218 and arginine 274 each coordinate D-serine. Positions 274, 305, 306, 308, and 310 each coordinate FAD. Glycine 306 contacts D-proline. A D-serine-binding site is contributed by glycine 306. The Microbody targeting signal motif lies at 330-332 (AKL).

It belongs to the DAMOX/DASOX family. The cofactor is FAD.

The protein localises to the peroxisome matrix. The catalysed reaction is a D-alpha-amino acid + O2 + H2O = a 2-oxocarboxylate + H2O2 + NH4(+). It carries out the reaction D-alanine + O2 + H2O = pyruvate + H2O2 + NH4(+). The enzyme catalyses D-arginine + O2 + H2O = 5-guanidino-2-oxopentanoate + H2O2 + NH4(+). It catalyses the reaction D-asparagine + O2 + H2O = 2-oxosuccinamate + H2O2 + NH4(+). The catalysed reaction is D-cysteine + O2 + H2O = 2-oxo-3-sulfanylpropanoate + H2O2 + NH4(+). It carries out the reaction D-glutamine + O2 + H2O = 2-oxoglutaramate + H2O2 + NH4(+). The enzyme catalyses D-isoleucine + O2 + H2O = (R)-3-methyl-2-oxopentanoate + H2O2 + NH4(+). It catalyses the reaction D-leucine + O2 + H2O = 4-methyl-2-oxopentanoate + H2O2 + NH4(+). The catalysed reaction is D-lysine + O2 + H2O = 6-amino-2-oxohexanoate + H2O2 + NH4(+). It carries out the reaction D-methionine + O2 + H2O = 4-methylsulfanyl-2-oxobutanoate + H2O2 + NH4(+). The enzyme catalyses D-phenylalanine + O2 + H2O = 3-phenylpyruvate + H2O2 + NH4(+). It catalyses the reaction D-proline + O2 = 1-pyrroline-2-carboxylate + H2O2. The catalysed reaction is D-valine + O2 + H2O = 3-methyl-2-oxobutanoate + H2O2 + NH4(+). It carries out the reaction D-histidine + O2 + H2O = 3-(imidazol-5-yl)pyruvate + H2O2 + NH4(+). The enzyme catalyses D-tyrosine + O2 + H2O = 3-(4-hydroxyphenyl)pyruvate + H2O2 + NH4(+). It catalyses the reaction D-serine + O2 + H2O = 3-hydroxypyruvate + H2O2 + NH4(+). The catalysed reaction is D-threonine + O2 + H2O = (S)-3-hydroxy-2-oxobutanoate + H2O2 + NH4(+). It carries out the reaction D-tryptophan + O2 + H2O = indole-3-pyruvate + H2O2 + NH4(+). Catalyzes the oxidative deamination of D-amino acids with broad substrate specificity. Could be responsible for the degradation of diet-derived D-alanine in the intestine. Maintains the asexual state of worms and represses early ovarian development. Following sexual induction, the enzyme is required for differentiation of oogonia into oocytes in the developing ovaries. The polypeptide is D-amino acid oxidase (Dugesia ryukyuensis (Freshwater planarian flatworm)).